A 658-amino-acid chain; its full sequence is MDSLLGCGVSAAAREPVPRYLTSQPRVSEVAMQSAPLEQPAKRPRCDGSPRTPPSTPPATANLSADDDFQNTDLRTWEPEDVCSFLENRGFREKKVLDIFRDNKIAGSFLPFLDEDRLEDLGVSSLEERKKMIECIQQLSQSRIDLMKVFNDPIHGHIEFHPLLIRIIDTPQFQRLRYIKQLGGGYYVFPGASHNRFEHSLGVGYLAGCLVRALAEKQPELQISERDILCVQIAGLCHDLGHGPFSHMFDGRFIPRARPEKKWKHEQGSIEMFEHLVNSNELKLVMKNYGLVPEEDITFIKEQIMGPPITPVKDSLWPYKGRPATKSFLYEIVSNKRNGIDVDKWDYFARDCHHLGIQNNFDYKRFIKFARICEVEYKVKEDKTYIRKVKHICSREKEVGNLYDMFHTRNCLHRRAYQHKISNLIDIMITDAFLKADPYVEITGTAGKKFRISTAIDDMEAFTKLTDNIFLEVLHSTDPQLSEAQSILRNIECRNLYKYLGETQPKREKIRKEEYERLPQEVAKAKPEKAPDVELKAEDFIVDVINVDYGMEDKNPIDRVHFYCKSNSKQAVRINKEQVSQLLPEKFAEQLIRVYCKKKDGKSLDAAGKHFVQWCALRDFTKPQDGDIIAPLITPLKWNNKTSSCLQEVSKVKTCLKF.

Residues 23–68 (SQPRVSEVAMQSAPLEQPAKRPRCDGSPRTPPSTPPATANLSADDD) are disordered. Residue S49 is modified to Phosphoserine. At T52 the chain carries Phosphothreonine. S55 is modified (phosphoserine). A Phosphothreonine modification is found at T56. S64 and S125 each carry phosphoserine. An SAM domain is found at 77–142 (WEPEDVCSFL…IECIQQLSQS (66 aa)). Positions 148 and 149 each coordinate GTP. N151 is a dGTP binding site. Residues D169, Q174, and R177 each coordinate GTP. Positions 182 and 188 each coordinate dGTP. The region spanning 196–348 (RFEHSLGVGY…GIDVDKWDYF (153 aa)) is the HD domain. Mn(2+) is bound by residues H199, H238, and D239. DGTP is bound by residues D239, H247, H265, and E266. H265 is an active-site residue. D343 serves as a coordination point for Mn(2+). DGTP contacts are provided by Y347, D351, R365, R395, K397, N401, Y417, H419, and K420. GTP-binding residues include R494 and K498. Residue K509 forms a Glycyl lysine isopeptide (Lys-Gly) (interchain with G-Cter in SUMO2) linkage. Position 565 (K565) interacts with GTP. Residue K565 coordinates dGTP. Residue T634 is modified to Phosphothreonine. (Microbial infection) Phosphothreonine is present on T634.

It belongs to the SAMHD1 family. In terms of assembly, homodimer; in absence of GTP and dNTP. Homotetramer; in GTP- and dNTP-bound form. Interacts with MRE11; leading to stimulate the exonuclease activity of MRE11. Interacts with RBBP8/CtIP. Interacts with RBBP8/CtIP. Interacts (via its C-terminus) with CD81. Zn(2+) serves as cofactor. Post-translationally, phosphorylation at Thr-634 by CDK1 acts as a switch to control deoxynucleoside triphosphate (dNTPase)-dependent and -independent functions. Phosphorylation at Thr-634 takes place in cycling cells: it reduces the stability of the homotetramer, impairing the dNTPase activity and subsequent ability to restrict infection by viruses. It also inhibits ability to suppress LINE-1 retrotransposon activity. In contrast, phosphorylation at Thr-634 promotes DNA end resection at stalled replication forks in response to DNA damage. (Microbial infection) Phosphorylation at Thr-634 by mouse cytomegalovirus kinase M97 leads to a reduced level of dNTP hydrolase activity and the loss of viral restriction. In terms of processing, not phosphorylated by CDK1 at the C-terminus.

The protein resides in the nucleus. Its subcellular location is the chromosome. It catalyses the reaction a 2'-deoxyribonucleoside 5'-triphosphate + H2O = a 2'-deoxyribonucleoside + triphosphate + H(+). The catalysed reaction is dATP + H2O = 2'-deoxyadenosine + triphosphate + H(+). The enzyme catalyses dCTP + H2O = 2'-deoxycytidine + triphosphate + H(+). It carries out the reaction dGTP + H2O = 2'-deoxyguanosine + triphosphate + H(+). It catalyses the reaction dTTP + H2O = thymidine + triphosphate + H(+). Allosterically activated and regulated via the combined actions of GTP and dNTPs (dATP, dGTP, dTTP and dCTP): Allosteric site 1 binds GTP, while allosteric site 2 binds dNTP. Allosteric activation promotes the formation of highly active homotetramers. Isoform 1: Phosphorylation at Thr-634 impairs homotetramerization, thereby inhibiting dNTPase activity, leading to reduced ability to restrict infection by viruses. In terms of biological role, protein that acts both as a host restriction factor involved in defense response to virus and as a regulator of DNA end resection at stalled replication forks. Has deoxynucleoside triphosphate (dNTPase) activity, which is required to restrict infection by viruses: dNTPase activity reduces cellular dNTP levels to levels too low for retroviral reverse transcription to occur, blocking early-stage virus replication in dendritic and other myeloid cells. Likewise, suppresses LINE-1 retrotransposon activity. In addition to virus restriction, dNTPase activity acts as a regulator of DNA precursor pools by regulating dNTP pools. Phosphorylation at Thr-634 acts as a switch to control dNTPase-dependent and -independent functions: it inhibits dNTPase activity and ability to restrict infection by viruses, while it promotes DNA end resection at stalled replication forks. Functions during S phase at stalled DNA replication forks to promote the resection of gapped or reversed forks: acts by stimulating the exonuclease activity of MRE11, activating the ATR-CHK1 pathway and allowing the forks to restart replication. Its ability to promote degradation of nascent DNA at stalled replication forks is required to prevent induction of type I interferons, thereby preventing chronic inflammation. Ability to promote DNA end resection at stalled replication forks is independent of dNTPase activity. Enhances immunoglobulin hypermutation in B-lymphocytes by promoting transversion mutation. The sequence is that of Deoxynucleoside triphosphate triphosphohydrolase SAMHD1 from Mus musculus (Mouse).